The sequence spans 71 residues: MVNAIKGVFVSCDIPMTQFIVNMNNSMPPSQKFIIHVLDSTHLFVQPHVEQMIRSAISDFRDQNSYEKPTS.

The protein belongs to the TFB5 family. As to quaternary structure, component of the 7-subunit TFIIH core complex composed of XPB, XPD, TFB1/GTF2H1, GTF2H2/P44, TFB4/GTF2H3, TFB2/GTF2H4 and TFB5/GTF2H5, which is active in NER. The core complex associates with the 3-subunit CDK-activating kinase (CAK) module composed of CYCH1/cyclin H1, CDKD and MAT1/At4g30820 to form the 10-subunit holoenzyme (holo-TFIIH) active in transcription.

The protein resides in the nucleus. Functionally, component of the general transcription and DNA repair factor IIH (TFIIH) core complex, which is involved in general and transcription-coupled nucleotide excision repair (NER) of damaged DNA and, when complexed to CAK, in RNA transcription by RNA polymerase II. In NER, TFIIH acts by opening DNA around the lesion to allow the excision of the damaged oligonucleotide and its replacement by a new DNA fragment. In transcription, TFIIH has an essential role in transcription initiation. When the pre-initiation complex (PIC) has been established, TFIIH is required for promoter opening and promoter escape. Phosphorylation of the C-terminal tail (CTD) of the largest subunit of RNA polymerase II by the kinase module CAK controls the initiation of transcription. The sequence is that of General transcription and DNA repair factor IIH subunit TFB5 from Arabidopsis thaliana (Mouse-ear cress).